Consider the following 219-residue polypeptide: Apoptosis regulator OPG045 (219 aa).

Belongs to the orthopoxvirus OPG045 family. Homodimer. Interacts with host pro-apoptotic protein BCL2L11 (via BH3 domain). Interacts with host NLRP1. Interacts with host BAK.

It localises to the host mitochondrion outer membrane. It is found in the host cytoplasm. Functionally, plays a role in evading host innate immune response by inhibiting host inflammasome activation. Interacts with and inhibits NLR-mediated interleukin-1 beta/IL1B production in infected cells. At the host mitochondria outer membrane, interacts with the BH3 domain of host BAK and prevents BAK from binding active BAX. In turn, host apoptosis is inhibited. The sequence is that of Apoptosis regulator OPG045 (OPG045) from Cynomys gunnisoni (Gunnison's prairie dog).